A 389-amino-acid chain; its full sequence is Phospho-N-acetylmuramoyl-pentapeptide-transferase (389 aa).

10 helical membrane passes run 25 to 45, 73 to 93, 97 to 117, 135 to 155, 190 to 210, 222 to 242, 258 to 278, 286 to 306, 311 to 331, and 366 to 386; these read RAVMATITALGIGLVCGPWVI, TMGGVLILIGIAVATLLWGDL, FIWIVMLVTFGFGVIGWVDDY, FWQSVIGLFAAVYLAFSVSEA, ISYPLGVWGFIVLTYFVIVGA, GLVIMPVVLVGGSLGVFAYVM, GAGELLIFCSAMGGAGLAFLW, VFMGDVGALALGGALGTVAVI, IVLFIMGGIFVAETLSVMLQV, and QVVVRFWIITLMLCLFGLSTL.

It belongs to the glycosyltransferase 4 family. MraY subfamily. Requires Mg(2+) as cofactor.

The protein localises to the cell inner membrane. It catalyses the reaction UDP-N-acetyl-alpha-D-muramoyl-L-alanyl-gamma-D-glutamyl-meso-2,6-diaminopimeloyl-D-alanyl-D-alanine + di-trans,octa-cis-undecaprenyl phosphate = di-trans,octa-cis-undecaprenyl diphospho-N-acetyl-alpha-D-muramoyl-L-alanyl-D-glutamyl-meso-2,6-diaminopimeloyl-D-alanyl-D-alanine + UMP. It functions in the pathway cell wall biogenesis; peptidoglycan biosynthesis. Catalyzes the initial step of the lipid cycle reactions in the biosynthesis of the cell wall peptidoglycan: transfers peptidoglycan precursor phospho-MurNAc-pentapeptide from UDP-MurNAc-pentapeptide onto the lipid carrier undecaprenyl phosphate, yielding undecaprenyl-pyrophosphoryl-MurNAc-pentapeptide, known as lipid I. The protein is Phospho-N-acetylmuramoyl-pentapeptide-transferase of Burkholderia ambifaria (strain ATCC BAA-244 / DSM 16087 / CCUG 44356 / LMG 19182 / AMMD) (Burkholderia cepacia (strain AMMD)).